A 167-amino-acid chain; its full sequence is Endoribonuclease YbeY (167 aa).

Zn(2+) is bound by residues His-132, His-136, and His-142.

This sequence belongs to the endoribonuclease YbeY family. Requires Zn(2+) as cofactor.

Its subcellular location is the cytoplasm. Single strand-specific metallo-endoribonuclease involved in late-stage 70S ribosome quality control and in maturation of the 3' terminus of the 16S rRNA. In Clostridium tetani (strain Massachusetts / E88), this protein is Endoribonuclease YbeY.